We begin with the raw amino-acid sequence, 244 residues long: MVHITRFEAPWFLKVGKKEYKWIIRSRAGPHKIQESVPLAILLKYYLKAVDTTREAKRIIFDGKVLVDGKVRRDYKYPVGLMDVVEIPSADLRVRIIPDNVRYLTTINISREDAKYKFVRIMNKTTLKSGVLQLNLEDGRNILLKGEELSQYNLPTLTTLKIELPEQKITTAYTIKEGVYAMIIGGRNAGLHGKISKIQLAKYKRIKYSLVTLEGKDGSTFQTNLINVMAIGENEADSNLGVKL.

Positions 37 to 123 constitute an S4 RNA-binding domain; the sequence is VPLAILLKYY…AKYKFVRIMN (87 aa).

Belongs to the eukaryotic ribosomal protein eS4 family.

The polypeptide is Small ribosomal subunit protein eS4 (rps4e) (Sulfolobus acidocaldarius (strain ATCC 33909 / DSM 639 / JCM 8929 / NBRC 15157 / NCIMB 11770)).